Consider the following 250-residue polypeptide: MGSKHRVDTKDKKRTRKNAEFGREKRNSGNQELSNEPEKDTIMEGDEAEEDEQNSSSDESSKIIDNEQSDAEEDDDEEEEDDDFPRKKKSKNSKHDDGSTGFSAAVNAILSSHLKAYDRKDPIMARNKKVLKQSESEKLEYKAKKALLAEKKKLLGKARKTDIIPIASGEDRSENIRKVLEKETALRKIAQKGAVKLFNAILATQVKTEKEVSENLSEIKNKEEKKELITEVSKEKFLDLVKAAAGSDNE.

Over residues 1–27 (MGSKHRVDTKDKKRTRKNAEFGREKRN) the composition is skewed to basic and acidic residues. Residues 1-101 (MGSKHRVDTK…NSKHDDGSTG (101 aa)) are disordered. 2 stretches are compositionally biased toward acidic residues: residues 43-53 (MEGDEAEEDEQ) and 67-83 (EQSDAEEDDDEEEEDDD). Ser69 is subject to Phosphoserine.

It belongs to the RRP15 family.

Its subcellular location is the nucleus. It is found in the nucleolus. Functionally, constituent of pre-60S ribosomal particles. Required for large subunit rRNA maturation, in particular processing of the 27S pre-rRNA at the A3 and B1 sites to yield 5.8S and 25S rRNA. This chain is Ribosomal RNA-processing protein 15, found in Saccharomyces cerevisiae (strain ATCC 204508 / S288c) (Baker's yeast).